The primary structure comprises 231 residues: 7-cyano-7-deazaguanine synthase (231 aa).

Residue 8 to 18 (FSGGQDSTTCL) participates in ATP binding. 4 residues coordinate Zn(2+): Cys188, Cys197, Cys200, and Cys203.

Belongs to the QueC family. The cofactor is Zn(2+).

The enzyme catalyses 7-carboxy-7-deazaguanine + NH4(+) + ATP = 7-cyano-7-deazaguanine + ADP + phosphate + H2O + H(+). Its pathway is purine metabolism; 7-cyano-7-deazaguanine biosynthesis. Functionally, catalyzes the ATP-dependent conversion of 7-carboxy-7-deazaguanine (CDG) to 7-cyano-7-deazaguanine (preQ(0)). The polypeptide is 7-cyano-7-deazaguanine synthase (Pectobacterium carotovorum subsp. carotovorum (strain PC1)).